The following is a 320-amino-acid chain: MRSAQVYRWQIPMDAGVVLRDRRLKTRDGLYVCLRDGEREGWGEISPLPGFSQETWEEAQTALLTWVNDWLQGSEGLPEMPSVAFGASCALAELTGVLPEAADYRAAPLCTGDPDDLVLRLADMPGEKIAKVKVGLYEAVRDGMVVNLLLEAIPDLHLRLDANRAWTPLKAQQFAKYVNPDYRARIAFLEEPCKTRDDSRAFARETGIAIAWDESLREADFTFEAEEGVRAVVIKPTLTGSLDKVREQVAAAHALGLTAVISSSIESSLGLTQLARIAAWLTPGTLPGLDTLHLMQAQQVRPWPGSALPCLKRDELERLL.

Residue K133 is the Proton donor of the active site. Positions 161, 190, and 213 each coordinate Mg(2+). Catalysis depends on K235, which acts as the Proton acceptor.

Belongs to the mandelate racemase/muconate lactonizing enzyme family. MenC type 1 subfamily. A divalent metal cation is required as a cofactor.

It carries out the reaction (1R,6R)-6-hydroxy-2-succinyl-cyclohexa-2,4-diene-1-carboxylate = 2-succinylbenzoate + H2O. Its pathway is quinol/quinone metabolism; 1,4-dihydroxy-2-naphthoate biosynthesis; 1,4-dihydroxy-2-naphthoate from chorismate: step 4/7. It functions in the pathway quinol/quinone metabolism; menaquinone biosynthesis. Its function is as follows. Converts 2-succinyl-6-hydroxy-2,4-cyclohexadiene-1-carboxylate (SHCHC) to 2-succinylbenzoate (OSB). This chain is o-succinylbenzoate synthase, found in Salmonella enteritidis PT4 (strain P125109).